We begin with the raw amino-acid sequence, 605 residues long: Protein Spindly (605 aa).

N-acetylmethionine is present on Met1. Residues 3–442 (TDIVINLRCK…ELKLKYEPEE (440 aa)) are a coiled coil. Phosphoserine occurs at positions 513, 515, and 555. Positions 545-581 (LSERSGNTLNSPRLAAESKLQTEVKEGKETASKLEKE) are disordered. The segment covering 564–581 (LQTEVKEGKETASKLEKE) has biased composition (basic and acidic residues).

The protein belongs to the Spindly family. Interacts with KNTC1 and ZW10. These interactions appear weak and may be transient or indirect. Interacts with dynein intermediate chain and dynactin (DCTN1). Interacts with the catalytically active form of USP45. Monoubiquitinated with'Lys-48' linkage. Deubiquitinated by USP45.

It is found in the cytoplasm. The protein localises to the cytoskeleton. The protein resides in the microtubule organizing center. Its subcellular location is the centrosome. It localises to the chromosome. It is found in the centromere. The protein localises to the kinetochore. The protein resides in the nucleus. Its subcellular location is the spindle pole. Required for the localization of dynein and dynactin to the mitotic kintochore. Dynein is believed to control the initial lateral interaction between the kinetochore and spindle microtubules and to facilitate the subsequent formation of end-on kinetochore-microtubule attachments mediated by the NDC80 complex. Also required for correct spindle orientation. Does not appear to be required for the removal of spindle assembly checkpoint (SAC) proteins from the kinetochore upon bipolar spindle attachment. Acts as an adapter protein linking the dynein motor complex to various cargos and converts dynein from a non-processive to a highly processive motor in the presence of dynactin. Facilitates the interaction between dynein and dynactin and activates dynein processivity (the ability to move along a microtubule for a long distance without falling off the track). Plays a role in cell migration. In Macaca fascicularis (Crab-eating macaque), this protein is Protein Spindly.